Consider the following 332-residue polypeptide: Anthranilate phosphoribosyltransferase (332 aa).

5-phospho-alpha-D-ribose 1-diphosphate contacts are provided by residues glycine 79, glycine 82–aspartate 83, serine 87, asparagine 89–threonine 92, lysine 107–serine 115, and serine 119. Glycine 79 contacts anthranilate. Serine 91 is a Mg(2+) binding site. Asparagine 110 provides a ligand contact to anthranilate. Position 165 (arginine 165) interacts with anthranilate. Positions 223 and 224 each coordinate Mg(2+).

The protein belongs to the anthranilate phosphoribosyltransferase family. In terms of assembly, homodimer. Mg(2+) serves as cofactor.

The enzyme catalyses N-(5-phospho-beta-D-ribosyl)anthranilate + diphosphate = 5-phospho-alpha-D-ribose 1-diphosphate + anthranilate. It functions in the pathway amino-acid biosynthesis; L-tryptophan biosynthesis; L-tryptophan from chorismate: step 2/5. Its function is as follows. Catalyzes the transfer of the phosphoribosyl group of 5-phosphorylribose-1-pyrophosphate (PRPP) to anthranilate to yield N-(5'-phosphoribosyl)-anthranilate (PRA). The sequence is that of Anthranilate phosphoribosyltransferase from Yersinia pseudotuberculosis serotype O:3 (strain YPIII).